The following is a 317-amino-acid chain: Ribose-phosphate pyrophosphokinase (317 aa).

ATP is bound by residues 43–45 (DGE) and 102–103 (RQ). 2 residues coordinate Mg(2+): His-136 and Asp-175. Residue Lys-198 is part of the active site. D-ribose 5-phosphate is bound by residues Arg-200, Asp-224, and 228–232 (DTAGT).

It belongs to the ribose-phosphate pyrophosphokinase family. Class I subfamily. In terms of assembly, homohexamer. It depends on Mg(2+) as a cofactor.

It localises to the cytoplasm. The catalysed reaction is D-ribose 5-phosphate + ATP = 5-phospho-alpha-D-ribose 1-diphosphate + AMP + H(+). It participates in metabolic intermediate biosynthesis; 5-phospho-alpha-D-ribose 1-diphosphate biosynthesis; 5-phospho-alpha-D-ribose 1-diphosphate from D-ribose 5-phosphate (route I): step 1/1. In terms of biological role, involved in the biosynthesis of the central metabolite phospho-alpha-D-ribosyl-1-pyrophosphate (PRPP) via the transfer of pyrophosphoryl group from ATP to 1-hydroxyl of ribose-5-phosphate (Rib-5-P). In Corynebacterium ammoniagenes (Brevibacterium ammoniagenes), this protein is Ribose-phosphate pyrophosphokinase.